Consider the following 200-residue polypeptide: Nucleoside triphosphate pyrophosphatase (200 aa).

D79 acts as the Proton acceptor in catalysis.

It belongs to the Maf family. A divalent metal cation is required as a cofactor.

The protein resides in the cytoplasm. The enzyme catalyses a ribonucleoside 5'-triphosphate + H2O = a ribonucleoside 5'-phosphate + diphosphate + H(+). It catalyses the reaction a 2'-deoxyribonucleoside 5'-triphosphate + H2O = a 2'-deoxyribonucleoside 5'-phosphate + diphosphate + H(+). Nucleoside triphosphate pyrophosphatase. May have a dual role in cell division arrest and in preventing the incorporation of modified nucleotides into cellular nucleic acids. This is Nucleoside triphosphate pyrophosphatase from Legionella pneumophila subsp. pneumophila (strain Philadelphia 1 / ATCC 33152 / DSM 7513).